We begin with the raw amino-acid sequence, 226 residues long: MRPHAVHALIAVKRLDQAKSRLADRLRPEHRARLVLAMLADTMTATTSVPGIAAVTVVTPDAAVADLARSLGGHVHPEPAADSADSLNAALAAAAAGVRARHGGVDLLALQADLPALRPDELADVLATAPRGGRAIVTDHAGTGTAALLVRDGGELAPAFGPDSARRHIAAGAVDLPGEWPGLRRDVDTAADLERAVELGAGSSTRALLRDIGWSCRVHEPARRVC.

The phosphoenolpyruvate site is built by threonine 145, glycine 161, and serine 164.

This sequence belongs to the CofC family.

It catalyses the reaction phosphoenolpyruvate + GTP + H(+) = enolpyruvoyl-2-diphospho-5'-guanosine + diphosphate. It functions in the pathway cofactor biosynthesis; coenzyme F420 biosynthesis. Its function is as follows. Guanylyltransferase that catalyzes the activation of phosphoenolpyruvate (PEP) as enolpyruvoyl-2-diphospho-5'-guanosine, via the condensation of PEP with GTP. It is involved in the biosynthesis of coenzyme F420, a hydride carrier cofactor. The chain is Phosphoenolpyruvate guanylyltransferase from Nocardia farcinica (strain IFM 10152).